The chain runs to 199 residues: Recombination protein RecR (199 aa).

The C4-type zinc finger occupies 57 to 72; the sequence is CSVCGNLTDDDPCNIC. One can recognise a Toprim domain in the interval 80 to 176; the sequence is STVLVVEDSK…TVTRLARGLA (97 aa).

The protein belongs to the RecR family.

Its function is as follows. May play a role in DNA repair. It seems to be involved in an RecBC-independent recombinational process of DNA repair. It may act with RecF and RecO. This is Recombination protein RecR from Streptococcus mutans serotype c (strain ATCC 700610 / UA159).